The primary structure comprises 441 residues: Protein arginine methyltransferase NDUFAF7, mitochondrial (441 aa).

A mitochondrion-targeting transit peptide spans 1 to 46 (MSVLLRSGLGPLCAVARAAIPFIWRGKYFSSGNEPAENPVTPMLRH).

This sequence belongs to the NDUFAF7 family. As to quaternary structure, interacts with NDUFS2.

The protein localises to the mitochondrion. The enzyme catalyses L-arginyl-[protein] + 2 S-adenosyl-L-methionine = N(omega),N(omega)'-dimethyl-L-arginyl-[protein] + 2 S-adenosyl-L-homocysteine + 2 H(+). Functionally, arginine methyltransferase involved in the assembly or stability of mitochondrial NADH:ubiquinone oxidoreductase complex (complex I). Acts by mediating symmetric dimethylation of 'Arg-118' of NDUFS2 after it assembles into the complex I, stabilizing the early intermediate complex. In Homo sapiens (Human), this protein is Protein arginine methyltransferase NDUFAF7, mitochondrial.